We begin with the raw amino-acid sequence, 437 residues long: MAAAFASLPTFSVVNSSRFPRRRIGFSCSKKPLEVRCSSGNTRYTKQRGAFTSLKECAISLALSVGLMVSVPSIALPPNAHAVANPVIPDVSVLISGPPIKDPEALLRYALPIDNKAIREVQKPLEDITDSLKIAGVKALDSVERNVRQASRTLQQGKSIIVAGFAESKKDHGNEMIEKLEAGMQDMLKIVEDRKRDAVAPKQKEILKYVGGIEEDMVDGFPYEVPEEYRNMPLLKGRASVDMKVKIKDNPNIEDCVFRIVLDGYNAPVTAGNFVDLVERHFYDGMEIQRSDGFVVQTGDPEGPAEGFIDPSTEKTRTVPLEIMVTGEKTPFYGSTLEELGLYKAQVVIPFNAFGTMAMAREEFENDSGSSQVFWLLKESELTPSNSNILDGRYAVFGYVTDNEDFLADLKVGDVIESIQVVSGLENLANPSYKIAG.

Residues 1 to 36 constitute a chloroplast transit peptide; it reads MAAAFASLPTFSVVNSSRFPRRRIGFSCSKKPLEVR. The N-terminal 56 residues, 37–92, are a transit peptide targeting the thylakoid; sequence CSSGNTRYTKQRGAFTSLKECAISLALSVGLMVSVPSIALPPNAHAVANPVIPDVS. Residues 245-437 enclose the PPIase cyclophilin-type domain; that stretch reads VKIKDNPNIE…LANPSYKIAG (193 aa).

As to expression, ubiquitous. Lower levels of expression in roots.

The protein localises to the plastid. Its subcellular location is the chloroplast thylakoid lumen. It carries out the reaction [protein]-peptidylproline (omega=180) = [protein]-peptidylproline (omega=0). Required for the assembly and stabilization of PSII, but has no PPIases activity. This is Peptidyl-prolyl cis-trans isomerase CYP38, chloroplastic (CYP38) from Arabidopsis thaliana (Mouse-ear cress).